We begin with the raw amino-acid sequence, 574 residues long: Proline--tRNA ligase (574 aa).

It belongs to the class-II aminoacyl-tRNA synthetase family. ProS type 1 subfamily. As to quaternary structure, homodimer.

It is found in the cytoplasm. The enzyme catalyses tRNA(Pro) + L-proline + ATP = L-prolyl-tRNA(Pro) + AMP + diphosphate. Its function is as follows. Catalyzes the attachment of proline to tRNA(Pro) in a two-step reaction: proline is first activated by ATP to form Pro-AMP and then transferred to the acceptor end of tRNA(Pro). As ProRS can inadvertently accommodate and process non-cognate amino acids such as alanine and cysteine, to avoid such errors it has two additional distinct editing activities against alanine. One activity is designated as 'pretransfer' editing and involves the tRNA(Pro)-independent hydrolysis of activated Ala-AMP. The other activity is designated 'posttransfer' editing and involves deacylation of mischarged Ala-tRNA(Pro). The misacylated Cys-tRNA(Pro) is not edited by ProRS. This is Proline--tRNA ligase from Hahella chejuensis (strain KCTC 2396).